A 194-amino-acid chain; its full sequence is MLYKFTVLLLIYSYLRNLQAVNMENKDLIPNITIVCTVYKPDGKEFTATYSKLKDPIEIIEKEAQFLDRFINNTIKSQNRIPEEKRQIKDGDEVLYSIKLKHANDAGRHLIFKHGMELMDCLLDRKICENEYNGSFTYSSKTDQELLDNSVTEFIENSTEEEMMIIDNAIDDIMCDDCNLFEMVDDYYLKWVLY.

Residues 1 to 20 (MLYKFTVLLLIYSYLRNLQA) form the signal peptide. N-linked (GlcNAc...) asparagine; by host glycans are attached at residues asparagine 31, asparagine 72, asparagine 133, and asparagine 157.

This is an uncharacterized protein from Ostreid herpesvirus 1 (isolate France) (OsHV-1).